Reading from the N-terminus, the 231-residue chain is Killer cell lectin-like receptor subfamily F member 1 (231 aa).

Residues 1 to 38 (MQDEERYMTLNVQSKKRSSAQTSQLTFKDYSVTLHWYK) are Cytoplasmic-facing. Residue Y7 is modified to Phosphotyrosine. Residues 39 to 59 (ILLGISGTVNGILTLTLISLI) form a helical; Signal-anchor for type II membrane protein membrane-spanning segment. Topologically, residues 60–231 (LLVSQGVLLK…SSVFKWICQY (172 aa)) are extracellular. Residues N77, N91, N96, and N176 are each glycosylated (N-linked (GlcNAc...) asparagine). The region spanning 121–230 (YQGKCYWFSN…CSSVFKWICQ (110 aa)) is the C-type lectin domain. Disulfide bonds link C142-C229 and C208-C221.

In terms of assembly, homodimer. Interacts with CLEC2B. Phosphorylated on Tyr-7; this phosphorylation is required for NKp80/KLRF1-mediated cytotoxicity. In terms of tissue distribution, strongly expressed in peripheral blood leukocytes and spleen, with weaker expression in lymph node and adult liver, and no expression detected in bone marrow, thymus, and fetal liver. Not expressed in brain, heart, placenta, lung, kidney, skeletal muscle, and pancreas. Within peripheral blood leukocyte and immunocyte cell lines, expression was predominant in NK cells but was also detected in monocytes.

Its subcellular location is the membrane. Functions as an activating receptor involved in immunosurveillance upon binding to various ligands displayed at the surface of myeloid cells. Upon interaction with CLEC2B ligand, stimulates NK-cell cytotoxicity and cytokine production leading to the cytolysis of malignant CLEC2B-expressing myeloid cells. Actviation of the common cytotoxicity pathway involves SRC and SYK kinases. The chain is Killer cell lectin-like receptor subfamily F member 1 (KLRF1) from Homo sapiens (Human).